The following is a 472-amino-acid chain: Cysteine--tRNA ligase (472 aa).

C29 contacts Zn(2+). Residues 31–41 carry the 'HIGH' region motif; that stretch reads PTVYNYIHIGN. Zn(2+) contacts are provided by C214, H239, and E243. The short motif at 273–277 is the 'KMSKS' region element; the sequence is KMSKS. An ATP-binding site is contributed by K276.

It belongs to the class-I aminoacyl-tRNA synthetase family. Monomer. The cofactor is Zn(2+).

Its subcellular location is the cytoplasm. The enzyme catalyses tRNA(Cys) + L-cysteine + ATP = L-cysteinyl-tRNA(Cys) + AMP + diphosphate. The chain is Cysteine--tRNA ligase from Lactobacillus gasseri (strain ATCC 33323 / DSM 20243 / BCRC 14619 / CIP 102991 / JCM 1131 / KCTC 3163 / NCIMB 11718 / NCTC 13722 / AM63).